Consider the following 777-residue polypeptide: 1,4-alpha-glucan branching enzyme GlgB (777 aa).

D408 serves as the catalytic Nucleophile. The Proton donor role is filled by E461.

This sequence belongs to the glycosyl hydrolase 13 family. GlgB subfamily. Monomer.

The catalysed reaction is Transfers a segment of a (1-&gt;4)-alpha-D-glucan chain to a primary hydroxy group in a similar glucan chain.. It participates in glycan biosynthesis; glycogen biosynthesis. In terms of biological role, catalyzes the formation of the alpha-1,6-glucosidic linkages in glycogen by scission of a 1,4-alpha-linked oligosaccharide from growing alpha-1,4-glucan chains and the subsequent attachment of the oligosaccharide to the alpha-1,6 position. The protein is 1,4-alpha-glucan branching enzyme GlgB of Actinobacillus pleuropneumoniae serotype 3 (strain JL03).